Consider the following 191-residue polypeptide: Protein phosphatase inhibitor 2 (191 aa).

Residues glutamate 20–glutamate 31 are compositionally biased toward basic and acidic residues. Disordered regions lie at residues glutamate 20–alanine 52 and arginine 67–isoleucine 191. A phosphoserine mark is found at serine 45 and serine 47. Acidic residues predominate over residues serine 93–glycine 109. A compositionally biased stretch (basic and acidic residues) spans lysine 114–arginine 136.

In terms of assembly, interacts with protein phosphatase 1. Interacts with TOPP1, SRK2D/SNRK2.2, SRK2I/SNRK2.3, SRK2E/SNRK2.6, SRK2C/SNRK2.8 and PYL11. Phosphorylated in vivo. Expressed in roots, cotyledons, leaves, flowers and siliques.

Its subcellular location is the nucleus. It is found in the cytoplasm. Its function is as follows. Inhibitor of protein-phosphatase 1 (PP1). Binds to and inhibits PP1 activity. Acts as negative regulator of abscisic acid (ABA) signaling. Enhances the inhibition of SRK2E/SNRK2.6 by TOPP1. May promote the interaction between TOPP1 and the ABA receptor PYL11. This Arabidopsis thaliana (Mouse-ear cress) protein is Protein phosphatase inhibitor 2.